The following is a 173-amino-acid chain: MRCPYCGSLDTQVKDSRPTEDNTAIRRRRVCPDCGGRFTTFERVQLRELMVVKRSGRRVPFDRDKLARSVEIALRKRPVETERVERMLSGLVRQLESLGDTEITSETIGEMVMEGLKQIDDVAYVRFASVYRNFREARDFESLLDELQLGERKAEALAKLKRADRTASESEPE.

Residues 3–34 (CPYCGSLDTQVKDSRPTEDNTAIRRRRVCPDC) fold into a zinc finger. Residues 49–139 (LMVVKRSGRR…VYRNFREARD (91 aa)) form the ATP-cone domain.

It belongs to the NrdR family. It depends on Zn(2+) as a cofactor.

Functionally, negatively regulates transcription of bacterial ribonucleotide reductase nrd genes and operons by binding to NrdR-boxes. The protein is Transcriptional repressor NrdR of Azorhizobium caulinodans (strain ATCC 43989 / DSM 5975 / JCM 20966 / LMG 6465 / NBRC 14845 / NCIMB 13405 / ORS 571).